The chain runs to 732 residues: Elongation factor 2 (732 aa).

The tr-type G domain occupies 19 to 260 (ERIRNMGIAA…MVVKHLPNPL (242 aa)). GTP contacts are provided by residues 28-35 (AHIDHGKT), 94-98 (DTPGH), and 148-151 (NKVD). Histidine 597 is subject to Diphthamide.

The protein belongs to the TRAFAC class translation factor GTPase superfamily. Classic translation factor GTPase family. EF-G/EF-2 subfamily.

The protein localises to the cytoplasm. Functionally, catalyzes the GTP-dependent ribosomal translocation step during translation elongation. During this step, the ribosome changes from the pre-translocational (PRE) to the post-translocational (POST) state as the newly formed A-site-bound peptidyl-tRNA and P-site-bound deacylated tRNA move to the P and E sites, respectively. Catalyzes the coordinated movement of the two tRNA molecules, the mRNA and conformational changes in the ribosome. This Thermococcus kodakarensis (strain ATCC BAA-918 / JCM 12380 / KOD1) (Pyrococcus kodakaraensis (strain KOD1)) protein is Elongation factor 2.